We begin with the raw amino-acid sequence, 257 residues long: Hydroxyethylthiazole kinase (257 aa).

Methionine 49 serves as a coordination point for substrate. 2 residues coordinate ATP: arginine 124 and threonine 170. Glycine 197 is a binding site for substrate.

It belongs to the Thz kinase family. The cofactor is Mg(2+).

It catalyses the reaction 5-(2-hydroxyethyl)-4-methylthiazole + ATP = 4-methyl-5-(2-phosphooxyethyl)-thiazole + ADP + H(+). It participates in cofactor biosynthesis; thiamine diphosphate biosynthesis; 4-methyl-5-(2-phosphoethyl)-thiazole from 5-(2-hydroxyethyl)-4-methylthiazole: step 1/1. Functionally, catalyzes the phosphorylation of the hydroxyl group of 4-methyl-5-beta-hydroxyethylthiazole (THZ). The sequence is that of Hydroxyethylthiazole kinase from Klebsiella pneumoniae subsp. pneumoniae (strain ATCC 700721 / MGH 78578).